The following is a 280-amino-acid chain: Large ribosomal subunit protein uL2 (280 aa).

Disordered regions lie at residues 1-59 (MAIR…GGHK) and 223-280 (GVVM…NKKR). The span at 23–33 (ELTRSTPEKSL) shows a compositional bias: basic and acidic residues. 2 stretches are compositionally biased toward basic residues: residues 36–59 (PLHK…GGHK) and 269–280 (VRRRRSNKNKKR).

The protein belongs to the universal ribosomal protein uL2 family. Part of the 50S ribosomal subunit. Forms a bridge to the 30S subunit in the 70S ribosome.

In terms of biological role, one of the primary rRNA binding proteins. Required for association of the 30S and 50S subunits to form the 70S ribosome, for tRNA binding and peptide bond formation. It has been suggested to have peptidyltransferase activity; this is somewhat controversial. Makes several contacts with the 16S rRNA in the 70S ribosome. This chain is Large ribosomal subunit protein uL2, found in Corynebacterium kroppenstedtii (strain DSM 44385 / JCM 11950 / CIP 105744 / CCUG 35717).